The following is a 129-amino-acid chain: Protein NrdI (129 aa).

The protein belongs to the NrdI family.

Its function is as follows. Probably involved in ribonucleotide reductase function. This is Protein NrdI from Macrococcus caseolyticus (strain JCSC5402) (Macrococcoides caseolyticum).